The sequence spans 235 residues: Flavonoid 3',5'-methyltransferase (235 aa).

S-adenosyl-L-methionine-binding positions include Val-51, Glu-73, 75 to 76 (GV), Ser-81, Asp-99, and Ala-128. Asp-151 contacts a divalent metal cation. Asp-153 lines the S-adenosyl-L-methionine pocket. A divalent metal cation contacts are provided by Asp-177 and Asn-178.

This sequence belongs to the class I-like SAM-binding methyltransferase superfamily. Cation-dependent O-methyltransferase family. CCoAMT subfamily. A divalent metal cation is required as a cofactor.

It is found in the cytoplasm. The catalysed reaction is S-adenosyl-L-methionine + a 3'-hydroxyflavonoid = S-adenosyl-L-homocysteine + a 3'-methoxyflavonoid.. It catalyses the reaction S-adenosyl-L-methionine + a 5'-hydroxy-3'-methoxyflavonoid = S-adenosyl-L-homocysteine + a 3',5'-dimethoxyflavonoid.. Its pathway is pigment biosynthesis; anthocyanin biosynthesis. In terms of biological role, mediates O-methylation of anthocyanins. Anthocyanins are major pigments in grapes: at ripening initiation in red grapevine berries, the exocarp turns color from green to red and then to purple due to the accumulation and extent of methylation of anthocyanins. Catalyzes both 3' and 5' O-methylation of anthocyanins, with a preference for glycosylated substrates. Active on both anthocyanins and flavonols in vitro. Most active with delphinidin 3-glucoside but also acts on cyanidin 3-glucoside, cyanidin, myricetin, quercetin and quercetin 3-glucoside. Not able to methylate flavan type skeletons with chiral centers, such as catechins or dihydroquercetin. The sequence is that of Flavonoid 3',5'-methyltransferase (FAOMT) from Vitis vinifera (Grape).